Consider the following 398-residue polypeptide: Bifunctional enzyme IspD/IspF (398 aa).

The interval 1–234 (MPNPPRTAAI…SRLTALLGDI (234 aa)) is 2-C-methyl-D-erythritol 4-phosphate cytidylyltransferase. Positions 235-398 (RTGTGYDVHA…LPWGAEGLAG (164 aa)) are 2-C-methyl-D-erythritol 2,4-cyclodiphosphate synthase. Asp-241 and His-243 together coordinate a divalent metal cation. Residues 241–243 (DVH) and 267–268 (HS) each bind 4-CDP-2-C-methyl-D-erythritol 2-phosphate. His-275 contacts a divalent metal cation. 4-CDP-2-C-methyl-D-erythritol 2-phosphate is bound by residues 289–291 (DIG), 365–368 (TTSE), Phe-372, and Arg-375.

The protein in the N-terminal section; belongs to the IspD/TarI cytidylyltransferase family. IspD subfamily. This sequence in the C-terminal section; belongs to the IspF family. A divalent metal cation serves as cofactor.

It carries out the reaction 2-C-methyl-D-erythritol 4-phosphate + CTP + H(+) = 4-CDP-2-C-methyl-D-erythritol + diphosphate. The catalysed reaction is 4-CDP-2-C-methyl-D-erythritol 2-phosphate = 2-C-methyl-D-erythritol 2,4-cyclic diphosphate + CMP. It participates in isoprenoid biosynthesis; isopentenyl diphosphate biosynthesis via DXP pathway; isopentenyl diphosphate from 1-deoxy-D-xylulose 5-phosphate: step 2/6. Its pathway is isoprenoid biosynthesis; isopentenyl diphosphate biosynthesis via DXP pathway; isopentenyl diphosphate from 1-deoxy-D-xylulose 5-phosphate: step 4/6. Functionally, bifunctional enzyme that catalyzes the formation of 4-diphosphocytidyl-2-C-methyl-D-erythritol from CTP and 2-C-methyl-D-erythritol 4-phosphate (MEP) (IspD), and catalyzes the conversion of 4-diphosphocytidyl-2-C-methyl-D-erythritol 2-phosphate (CDP-ME2P) to 2-C-methyl-D-erythritol 2,4-cyclodiphosphate (ME-CPP) with a corresponding release of cytidine 5-monophosphate (CMP) (IspF). The polypeptide is Bifunctional enzyme IspD/IspF (Rhodopseudomonas palustris (strain BisB5)).